A 252-amino-acid polypeptide reads, in one-letter code: MKILVTNDDGVRAPGIRSLAEALRNIGDVVVVAPDRERSAVGHALTLHHPLRASEIRPAVFAVDGTPTDCVNLGIHTLLGSRPDIVVSGVNCGGNMGDDITYSGTVSAAMEATLMGIPALAVSLATSGRGDNYAVASAFAARLVRIVSERGLPPDTLLNVNVPDLPLEKLGGAVVTIQGKRDYEGKIVTKTDPRGRNYYWIGNGSLQFRDLEGTDYYAVKRGLVSITPLHLDLTNYASLTTLKTWDFAEMTL.

The a divalent metal cation site is built by Asp8, Asp9, Ser39, and Asn91.

Belongs to the SurE nucleotidase family. It depends on a divalent metal cation as a cofactor.

It is found in the cytoplasm. The catalysed reaction is a ribonucleoside 5'-phosphate + H2O = a ribonucleoside + phosphate. Functionally, nucleotidase that shows phosphatase activity on nucleoside 5'-monophosphates. The sequence is that of 5'-nucleotidase SurE from Geobacter metallireducens (strain ATCC 53774 / DSM 7210 / GS-15).